Consider the following 275-residue polypeptide: Elongation factor Ts (275 aa).

Residues 76-79 (TDFV) are involved in Mg(2+) ion dislocation from EF-Tu.

The protein belongs to the EF-Ts family.

The protein localises to the cytoplasm. Associates with the EF-Tu.GDP complex and induces the exchange of GDP to GTP. It remains bound to the aminoacyl-tRNA.EF-Tu.GTP complex up to the GTP hydrolysis stage on the ribosome. This chain is Elongation factor Ts, found in Rhodococcus erythropolis (strain PR4 / NBRC 100887).